We begin with the raw amino-acid sequence, 100 residues long: Replication restart protein PriB (100 aa).

In terms of domain architecture, SSB spans 1–99 (MGFNNLVSLA…LRIQNIQEYK (99 aa)).

This sequence belongs to the PriB family. Homodimer. Interacts with PriA and DnaT. Component of the replication restart primosome. Primosome assembly occurs via a 'hand-off' mechanism. PriA binds to replication forks, subsequently PriB then DnaT bind; DnaT then displaces ssDNA to generate the helicase loading substrate.

Its function is as follows. Involved in the restart of stalled replication forks, which reloads the replicative helicase on sites other than the origin of replication; the PriA-PriB pathway is the major replication restart pathway. During primosome assembly it facilitates complex formation between PriA and DnaT on DNA; stabilizes PriA on DNA. Stimulates the DNA unwinding activity of PriA helicase. This is Replication restart protein PriB from Neisseria meningitidis serogroup A / serotype 4A (strain DSM 15465 / Z2491).